Consider the following 311-residue polypeptide: Asialoglycoprotein receptor 2 (311 aa).

Residues 1 to 44 (MAKDFQDIQQLSSEENDHPFHQGEGPGTRRLNPRRGNPFLKGPP) form a disordered region. Residues 1 to 58 (MAKDFQDIQQLSSEENDHPFHQGEGPGTRRLNPRRGNPFLKGPPPAQPLAQRLCSMVC) are Cytoplasmic-facing. Residues 5–8 (FQDI) carry the Endocytosis signal motif. S13 carries the phosphoserine modification. C54 carries S-palmitoyl cysteine lipidation. Residues 59 to 79 (FSLLALSFNILLLVVICVTGS) traverse the membrane as a helical; Signal-anchor for type II membrane protein segment. Over 80–311 (QSEGHGGAQL…KRRNATGEVA (232 aa)) the chain is Extracellular. N102 and N170 each carry an N-linked (GlcNAc...) asparagine glycan. The C-type lectin domain maps to 176 to 302 (CCPVNWVEHQ…LQVYRWVCEK (127 aa)). Disulfide bonds link C177–C188, C205–C300, and C278–C292. N305 is a glycosylation site (N-linked (GlcNAc...) asparagine).

In terms of assembly, the functioning ligand-binding unit of this receptor is thought to be at least a dimer. Interacts with LASS2. As to quaternary structure, (Microbial infection) Interacts with hepatitis E virus capsid protein ORF2. As to expression, expressed exclusively in hepatic parenchymal cells.

It localises to the membrane. Functionally, mediates the endocytosis of plasma glycoproteins to which the terminal sialic acid residue on their complex carbohydrate moieties has been removed. The receptor recognizes terminal galactose and N-acetylgalactosamine units. After ligand binding to the receptor, the resulting complex is internalized and transported to a sorting organelle, where receptor and ligand are disassociated. The receptor then returns to the cell membrane surface. This is Asialoglycoprotein receptor 2 (ASGR2) from Homo sapiens (Human).